Consider the following 298-residue polypeptide: Cyclin-D4-2 (298 aa).

It belongs to the cyclin family. Cyclin D subfamily. As to quaternary structure, interacts with CDKA-1 to form a kinase complex.

Functionally, may promote cell division. This chain is Cyclin-D4-2 (CYCD4-2), found in Arabidopsis thaliana (Mouse-ear cress).